The chain runs to 155 residues: Small ribosomal subunit protein uS7c (155 aa).

This sequence belongs to the universal ribosomal protein uS7 family. Part of the 30S ribosomal subunit.

The protein localises to the plastid. It localises to the chloroplast. In terms of biological role, one of the primary rRNA binding proteins, it binds directly to 16S rRNA where it nucleates assembly of the head domain of the 30S subunit. The protein is Small ribosomal subunit protein uS7c (rps7) of Pinus thunbergii (Japanese black pine).